We begin with the raw amino-acid sequence, 337 residues long: Probable phospholipase A1 magnifin (337 aa).

Residues 1 to 21 (MNLKYLLLFFCLVQVLHYCYS) form the signal peptide. Residues 22 to 33 (HGDPSLSNELDR) constitute a propeptide that is removed on maturation. A disulfide bridge links Cys39 with Cys123. The active-site Nucleophile is the Ser173. The active-site Charge relay system is Asp201. 2 disulfides stabilise this stretch: Cys212/Cys217 and Cys255/Cys264. His266 functions as the Charge relay system in the catalytic mechanism. 3 disulfides stabilise this stretch: Cys281–Cys305, Cys282–Cys330, and Cys298–Cys303.

This sequence belongs to the AB hydrolase superfamily. Lipase family. In terms of tissue distribution, expressed by the venom gland.

Its subcellular location is the secreted. The enzyme catalyses a 1,2-diacyl-sn-glycero-3-phosphocholine + H2O = a 2-acyl-sn-glycero-3-phosphocholine + a fatty acid + H(+). Catalyzes the hydrolysis of phosphatidylcholine with phospholipase A1 activity. May act as an allergen and induce hemolytic activity. In vivo, induces dose-dependent platelet aggregation (nanomolar concentration) and induces thrombosis. This chain is Probable phospholipase A1 magnifin, found in Vespa magnifica (Hornet).